A 936-amino-acid polypeptide reads, in one-letter code: Myocardin-related transcription factor A (936 aa).

RPEL repeat units follow at residues 15–40 (TVLQLKLQQRRTREELENQGIMPPLK), 59–84 (DYLKRKIRSRPERAELVRMHILEETS), and 103–128 (DDLNEKISQRPGPMELVVKNILPVET). The Bipartite Nuclear localization signal signature appears at 62–100 (KRKIRSRPERAELVRMHILEETSAEPSLQAKQIKLKRAR). Disordered regions lie at residues 146 to 185 (SSFDEDSSDALSPEQPASQESQGSIPSPIENRPSETTQIP), 234 to 258 (SQPKPSFEKSQRIKKPKEPKPKVKK), and 401 to 422 (SQDPSTATAASAKPTPVQQAKP). Positions 160-170 (QPASQESQGSI) are enriched in polar residues. The span at 239–254 (SFEKSQRIKKPKEPKP) shows a compositional bias: basic and acidic residues. The SAP domain maps to 368 to 402 (LDEMKVAELKLELKHRGLPVSGTKIDLIERLKASQ). The span at 404–416 (PSTATAASAKPTP) shows a compositional bias: low complexity. A coiled-coil region spans residues 497-542 (DARDKDLMLREKDRQIEELTQRLKQKQELVERLRQQLEQEKRTPQH). The disordered stretch occupies residues 707 to 755 (HNESPATPPQQPEPEPPPHSIFLTHSSPQWSKNPPGYDEAMKQQPNSCE). Residues 712 to 725 (ATPPQQPEPEPPPH) show a composition bias toward pro residues. The span at 729-738 (LTHSSPQWSK) shows a compositional bias: polar residues.

Interacts with srf, forming the srf-mrtfa nuclear complex which binds the 5'-CArG-3' consensus motif (CArG box) on DNA via srf. Interacts (via RPEL repeats) with globular actin (G-actin), thereby regulating its subcellular location and activity of the complex formed with srf.

It localises to the cytoplasm. The protein localises to the nucleus. Functionally, transcription coactivator that associates with the serum response factor (srf) transcription factor to control expression of genes regulating the cytoskeleton during development, morphogenesis and cell migration. The srf-mrtfa complex activity responds to Rho GTPase-induced changes in cellular globular actin (G-actin) concentration, thereby coupling cytoskeletal gene expression to cytoskeletal dynamics. Mrtfa binds G-actin via its RPEL repeats, regulating activity of the mrtfa-srf complex. Activity is also regulated by filamentous actin (F-actin) in the nucleus. The protein is Myocardin-related transcription factor A (mrtfa) of Xenopus laevis (African clawed frog).